The chain runs to 233 residues: Phosphoribosylformylglycinamidine synthase subunit PurQ (233 aa).

Positions 3–233 (SAVLVFPGIN…GLAQHLAKAA (231 aa)) constitute a Glutamine amidotransferase type-1 domain. Cysteine 87 acts as the Nucleophile in catalysis. Residues histidine 204 and glutamate 206 contribute to the active site.

Part of the FGAM synthase complex composed of 1 PurL, 1 PurQ and 2 PurS subunits.

It is found in the cytoplasm. It carries out the reaction N(2)-formyl-N(1)-(5-phospho-beta-D-ribosyl)glycinamide + L-glutamine + ATP + H2O = 2-formamido-N(1)-(5-O-phospho-beta-D-ribosyl)acetamidine + L-glutamate + ADP + phosphate + H(+). The catalysed reaction is L-glutamine + H2O = L-glutamate + NH4(+). Its pathway is purine metabolism; IMP biosynthesis via de novo pathway; 5-amino-1-(5-phospho-D-ribosyl)imidazole from N(2)-formyl-N(1)-(5-phospho-D-ribosyl)glycinamide: step 1/2. In terms of biological role, part of the phosphoribosylformylglycinamidine synthase complex involved in the purines biosynthetic pathway. Catalyzes the ATP-dependent conversion of formylglycinamide ribonucleotide (FGAR) and glutamine to yield formylglycinamidine ribonucleotide (FGAM) and glutamate. The FGAM synthase complex is composed of three subunits. PurQ produces an ammonia molecule by converting glutamine to glutamate. PurL transfers the ammonia molecule to FGAR to form FGAM in an ATP-dependent manner. PurS interacts with PurQ and PurL and is thought to assist in the transfer of the ammonia molecule from PurQ to PurL. This Rhodopseudomonas palustris (strain ATCC BAA-98 / CGA009) protein is Phosphoribosylformylglycinamidine synthase subunit PurQ.